The chain runs to 331 residues: tRNA U34 carboxymethyltransferase (331 aa).

Carboxy-S-adenosyl-L-methionine contacts are provided by residues lysine 91, tryptophan 105, lysine 110, glycine 130, 152–154 (DPS), 181–182 (IE), methionine 196, tyrosine 200, and arginine 315.

This sequence belongs to the class I-like SAM-binding methyltransferase superfamily. CmoB family. In terms of assembly, homotetramer.

The catalysed reaction is carboxy-S-adenosyl-L-methionine + 5-hydroxyuridine(34) in tRNA = 5-carboxymethoxyuridine(34) in tRNA + S-adenosyl-L-homocysteine + H(+). In terms of biological role, catalyzes carboxymethyl transfer from carboxy-S-adenosyl-L-methionine (Cx-SAM) to 5-hydroxyuridine (ho5U) to form 5-carboxymethoxyuridine (cmo5U) at position 34 in tRNAs. The polypeptide is tRNA U34 carboxymethyltransferase (Shewanella baltica (strain OS155 / ATCC BAA-1091)).